A 202-amino-acid chain; its full sequence is UPF0637 protein Exig_2520 (202 aa).

The protein belongs to the UPF0637 family.

This is UPF0637 protein Exig_2520 from Exiguobacterium sibiricum (strain DSM 17290 / CCUG 55495 / CIP 109462 / JCM 13490 / 255-15).